We begin with the raw amino-acid sequence, 390 residues long: GDSL esterase/lipase At1g28640 (390 aa).

Residues 1-26 (MASSLEKLISSFLLVLYSTTIIVASS) form the signal peptide. The Nucleophile role is filled by Ser42. N-linked (GlcNAc...) asparagine glycosylation is found at Asn105, Asn138, and Asn321. Active-site residues include Asp346 and His349. Asn364 carries an N-linked (GlcNAc...) asparagine glycan.

The protein belongs to the 'GDSL' lipolytic enzyme family.

The protein resides in the secreted. This Arabidopsis thaliana (Mouse-ear cress) protein is GDSL esterase/lipase At1g28640.